Reading from the N-terminus, the 424-residue chain is Probable ribonuclease FAU-1 (424 aa).

It belongs to the FAU-1 family.

Functionally, probable RNase involved in rRNA stability through maturation and/or degradation of precursor rRNAs. Binds to RNA in loop regions with AU-rich sequences. The protein is Probable ribonuclease FAU-1 of Saccharolobus islandicus (strain L.S.2.15 / Lassen #1) (Sulfolobus islandicus).